Reading from the N-terminus, the 359-residue chain is Guanine nucleotide-binding protein subunit alpha-11 (359 aa).

S-palmitoyl cysteine attachment occurs at residues Cys-9 and Cys-10. Residues 38 to 359 (RELKLLLLGT…QLNLKEYNLV (322 aa)) form the G-alpha domain. The G1 motif stretch occupies residues 41 to 54 (KLLLLGTGESGKST). Residues 46–53 (GTGESGKS) and 180–183 (LRVR) contribute to the GTP site. Ser-53 contacts Mg(2+). The tract at residues 178-186 (DVLRVRVPT) is G2 motif. Thr-186 contacts Mg(2+). The tract at residues 201-210 (FRMVDVGGQR) is G3 motif. Deamidated glutamine; by Photorhabdus PAU_02230 is present on Gln-209. Residues 270-277 (ILFLNKKD) form a G4 motif region. GTP is bound by residues 274–277 (NKKD) and Ala-331. A G5 motif region spans residues 329-334 (TCATDT).

This sequence belongs to the G-alpha family. G(q) subfamily. G proteins are composed of 3 units; alpha, beta and gamma. The alpha chain contains the guanine nucleotide binding site. Interacts with RGS22. Interacts with NTSR1. As to quaternary structure, (Microbial infection) Interacts with human cytomegalovirus (HHV-5) US28. In terms of processing, (Microbial infection) Deamidated at Gln-209 by Photorhabdus asymbiotica toxin PAU_02230, blocking GTP hydrolysis of heterotrimeric GNAQ or GNA11 and G-alphai (GNAI1, GNAI2 or GNAI3) proteins, thereby activating RhoA. As to expression, expressed in testis.

Its subcellular location is the cell membrane. The protein localises to the cytoplasm. The enzyme catalyses GTP + H2O = GDP + phosphate + H(+). Its function is as follows. Guanine nucleotide-binding proteins (G proteins) function as transducers downstream of G protein-coupled receptors (GPCRs) in numerous signaling cascades. The alpha chain contains the guanine nucleotide binding site and alternates between an active, GTP-bound state and an inactive, GDP-bound state. Signaling by an activated GPCR promotes GDP release and GTP binding. The alpha subunit has a low GTPase activity that converts bound GTP to GDP, thereby terminating the signal. Both GDP release and GTP hydrolysis are modulated by numerous regulatory proteins. Signaling is mediated via phospholipase C-beta-dependent inositol lipid hydrolysis for signal propagation: activates phospholipase C-beta: following GPCR activation, GNA11 activates PLC-beta (PLCB1, PLCB2, PLCB3 or PLCB4), leading to production of diacylglycerol (DAG) and inositol 1,4,5-trisphosphate (IP3). Transduces FFAR4 signaling in response to long-chain fatty acids (LCFAs). Together with GNAQ, required for heart development. In the respiratory epithelium, transmits OXGR1-dependent signals that lead to downstream intracellular Ca(2+) release and mucocilliary clearance of airborne pathogens. This is Guanine nucleotide-binding protein subunit alpha-11 (GNA11) from Homo sapiens (Human).